The chain runs to 793 residues: Flavin carrier protein 1 (793 aa).

The signal sequence occupies residues 1–21 (MQVLVTLWCLICTCLVLPVAA). Over 22-163 (KKRTLTASSL…FFSNGKTVSQ (142 aa)) the chain is Lumenal. Residue N143 is glycosylated (N-linked (GlcNAc...) asparagine). The chain crosses the membrane as a helical span at residues 164-184 (IGVKWVTAVIAGIGLLTSAVL). Residues 185–194 (STFGNSTAAS) are Cytoplasmic-facing. Residues 195 to 215 (HISANTMSLFLYFQSVAVVAM) traverse the membrane as a helical segment. Over 216–223 (QHVDSVPP) the chain is Lumenal. Residues 224–244 (IAAAWSENLAWSMGLIRITFM) form a helical membrane-spanning segment. Residues 245–249 (QKIFR) are Cytoplasmic-facing. A helical membrane pass occupies residues 250-272 (WYVEATGGSASLYLTATTMSVLT). The Lumenal segment spans residues 273 to 317 (QRGLDYLKNTSVYKRAENVLYGNSNTLIFRGIKRMGYRMKIENTA). The N-linked (GlcNAc...) asparagine glycan is linked to N281. A helical transmembrane segment spans residues 318–338 (IVCTGFTFFVLCGYFLAGFIM). Over 339–372 (ACKYSIELCIRCGWMRSDRFYQFRKNWRSVLKGS) the chain is Cytoplasmic. The helical transmembrane segment at 373 to 393 (LLRYIYIGFTQLTILSFWEFT) threads the bilayer. Residues 394-397 (ERDS) lie on the Lumenal side of the membrane. The helical transmembrane segment at 398–418 (AGVIVIACLFIVLSCGLMAWA) threads the bilayer. Over 419–461 (AYRTIFFASKSVEMYNNPAALLYGDEYVLNKYGFFYTMFNAKH) the chain is Cytoplasmic. The helical transmembrane segment at 462-482 (YWWNALLTTYILVKALFVGFA) threads the bilayer. Over 483-484 (QA) the chain is Lumenal. Residues 485-505 (SGKTQALAIFIIDLAYFVAII) traverse the membrane as a helical segment. Topologically, residues 506 to 516 (RYKPYLDRPTN) are cytoplasmic. A helical membrane pass occupies residues 517-537 (IVNIFICTVTLVNSFLFMFFS). The Lumenal portion of the chain corresponds to 538–551 (NLFNQKYAVSAIMG). The chain crosses the membrane as a helical span at residues 552–572 (WVFFIMNAAFSLLLLLMILAF). Topologically, residues 573–793 (TTIILFSKNP…KANILDPDYL (221 aa)) are cytoplasmic. S610 is subject to Phosphoserine. Phosphothreonine is present on T626. Disordered stretches follow at residues 649–674 (YDDE…PTFS) and 689–731 (KLGS…QESE). The segment covering 701 to 719 (ITQQEVSPDRASSSPNSKS) has biased composition (polar residues). A phosphoserine mark is found at S771 and S774.

Belongs to the transient receptor potential (TRP) ion channel family.

The protein resides in the endoplasmic reticulum membrane. In terms of biological role, may be responsible for the transport of FAD into the endoplasmic reticulum lumen, where it is required for oxidative protein folding. This Saccharomyces cerevisiae (strain ATCC 204508 / S288c) (Baker's yeast) protein is Flavin carrier protein 1 (FLC1).